Consider the following 402-residue polypeptide: Acetate kinase (402 aa).

Residue N10 coordinates Mg(2+). K17 is a binding site for ATP. R89 is a binding site for substrate. The active-site Proton donor/acceptor is D148. ATP-binding positions include 208–212, 283–285, and 334–338; these read HLGNG, DCR, and GIGEN. E389 contributes to the Mg(2+) binding site.

The protein belongs to the acetokinase family. In terms of assembly, homodimer. It depends on Mg(2+) as a cofactor. The cofactor is Mn(2+).

The protein localises to the cytoplasm. The enzyme catalyses acetate + ATP = acetyl phosphate + ADP. It functions in the pathway metabolic intermediate biosynthesis; acetyl-CoA biosynthesis; acetyl-CoA from acetate: step 1/2. Its function is as follows. Catalyzes the formation of acetyl phosphate from acetate and ATP. Can also catalyze the reverse reaction. In Actinobacillus pleuropneumoniae serotype 5b (strain L20), this protein is Acetate kinase.